A 413-amino-acid polypeptide reads, in one-letter code: Interferon-inducible GTPase 1 (413 aa).

Residue glycine 2 is the site of N-myristoyl glycine attachment. In terms of domain architecture, IRG-type G spans 68-250; the sequence is SVLNVAVTGE…PVLMDKLISD (183 aa). The GDP site is built by glycine 79, glycine 81, lysine 82, serine 83, serine 84, threonine 102, and glycine 103. Threonine 102 is subject to (Microbial infection) Phosphothreonine; by ROP18. Threonine 108 carries the (Microbial infection) Phosphothreonine; by ROP18 modification. GDP is bound by residues lysine 184, aspartate 186, serine 187, and asparagine 232. The cysteines at positions 236 and 410 are disulfide-linked.

The protein belongs to the TRAFAC class dynamin-like GTPase superfamily. IRG family. As to quaternary structure, monomer, as apoenzyme and in the GDP-bound form. Homooligomer, upon GTP binding. Interacts with HOOK3. (Microbial infection) Interacts with Toxoplasma gondii GRA7 in GTP-dependent manner; the interaction results in faster turnover of the GTP-activated IIGP1 oligomer. Interacts with T.gondii ROP5; the interaction results in inhibition of IRGA6/IIGP1 GTPase activity and oligomerization. Myristoylated. Post-translationally, (Microbial infection) Phosphorylated by Toxoplasma gondii ROP18 from virulent strains.

It is found in the cytoplasm. Its subcellular location is the nucleus membrane. The protein localises to the endoplasmic reticulum membrane. It localises to the golgi apparatus. The protein resides in the golgi stack membrane. It is found in the parasitophorous vacuole membrane. The enzyme catalyses GTP + H2O = GDP + phosphate + H(+). In terms of biological role, GTPase with low activity. Has higher affinity for GDP than for GTP. Plays a role in resistance to intracellular pathogens. During infection with avirulent Toxoplasma gondii strains, recruited to the parasitophorous vacuole membrane. Required for disruption of the parasitophorous vacuole formed following T.gondii infection and subsequent killing of the parasite. Mediates resistance to Chlamydia trachomatis infection by targeting bacterial inclusions to autophagosomes for subsequent lysosomal destruction. The polypeptide is Interferon-inducible GTPase 1 (Iigp1) (Mus musculus (Mouse)).